The primary structure comprises 429 residues: UPF0053 protein YugS (429 aa).

Transmembrane regions (helical) follow at residues 1–21 (MLIL…VFVA), 61–81 (ACQL…EPTF), 101–121 (IVTF…MGEL), and 133–153 (AVSL…YPFI). In terms of domain architecture, CNNM transmembrane spans 1 to 201 (MLILQLIAIF…YEKGEINQSE (201 aa)). CBS domains follow at residues 220–281 (MIPR…PIKL) and 284–341 (IMRP…IRDE).

The protein belongs to the UPF0053 family.

It localises to the cell membrane. The protein is UPF0053 protein YugS (yugS) of Bacillus subtilis (strain 168).